Here is a 279-residue protein sequence, read N- to C-terminus: DNA repair protein RecO (279 aa).

It belongs to the RecO family.

Its function is as follows. Involved in DNA repair and RecF pathway recombination. This chain is DNA repair protein RecO, found in Thermosynechococcus vestitus (strain NIES-2133 / IAM M-273 / BP-1).